We begin with the raw amino-acid sequence, 445 residues long: Phosphoglucosamine mutase (445 aa).

Residue serine 102 is the Phosphoserine intermediate of the active site. 4 residues coordinate Mg(2+): serine 102, aspartate 241, aspartate 243, and aspartate 245. Serine 102 is modified (phosphoserine).

Belongs to the phosphohexose mutase family. It depends on Mg(2+) as a cofactor. Post-translationally, activated by phosphorylation.

The catalysed reaction is alpha-D-glucosamine 1-phosphate = D-glucosamine 6-phosphate. In terms of biological role, catalyzes the conversion of glucosamine-6-phosphate to glucosamine-1-phosphate. The chain is Phosphoglucosamine mutase from Shewanella denitrificans (strain OS217 / ATCC BAA-1090 / DSM 15013).